The primary structure comprises 229 residues: Demethylmenaquinone methyltransferase (229 aa).

S-adenosyl-L-methionine-binding positions include Thr57, Asp77, and 101-102 (DV).

The protein belongs to the class I-like SAM-binding methyltransferase superfamily. MenG/UbiE family.

It carries out the reaction a 2-demethylmenaquinol + S-adenosyl-L-methionine = a menaquinol + S-adenosyl-L-homocysteine + H(+). The protein operates within quinol/quinone metabolism; menaquinone biosynthesis; menaquinol from 1,4-dihydroxy-2-naphthoate: step 2/2. In terms of biological role, methyltransferase required for the conversion of demethylmenaquinol (DMKH2) to menaquinol (MKH2). This Chlamydia trachomatis serovar A (strain ATCC VR-571B / DSM 19440 / HAR-13) protein is Demethylmenaquinone methyltransferase.